Consider the following 696-residue polypeptide: DNA topoisomerase 6 subunit B (696 aa).

Positions 1 to 36 (MDDDAGDGAASGGTKRKVTAASSSAAAKGKAAGKGK) are disordered. A compositionally biased stretch (low complexity) spans 20–36 (AASSSAAAKGKAAGKGK). Residues asparagine 88, aspartate 187, 208 to 209 (TK), 217 to 224 (GKFGLGAK), and lysine 543 each bind ATP.

This sequence belongs to the TOP6B family. Homodimer. Heterotetramer of two TOP6A and two TOP6B subunits. Interacts with SPO11-2 and TOP6A3. Highly expressed in flowers before pollination. Expressed in roots and shoots.

It localises to the nucleus. The catalysed reaction is ATP-dependent breakage, passage and rejoining of double-stranded DNA.. Functionally, component of the DNA topoisomerase VI involved in chromatin organization and progression of endoreduplication cycles. Relaxes both positive and negative superturns and exhibits a strong decatenase activity. The B subunit binds ATP. May be involved in cell proliferation and stress tolerance. The polypeptide is DNA topoisomerase 6 subunit B (Oryza sativa subsp. indica (Rice)).